Consider the following 161-residue polypeptide: Allophycocyanin beta chain (161 aa).

Asn71 is subject to N4-methylasparagine. (2R,3E)-phycocyanobilin is bound at residue Cys81.

The protein belongs to the phycobiliprotein family. Heterodimer of an alpha and a beta chain. In terms of processing, contains one covalently linked phycocyanobilin chromophore.

Its subcellular location is the cellular thylakoid membrane. In terms of biological role, light-harvesting photosynthetic bile pigment-protein from the phycobiliprotein complex. Allophycocyanin has a maximum absorption at approximately 650 nanometers. The chain is Allophycocyanin beta chain (apcB) from Arthrospira platensis (Spirulina platensis).